The primary structure comprises 503 residues: Cytochrome P450 monooxygenase lnbC (503 aa).

Residues 14–34 (VVLLLSSVWIAVHLVLAAYNV) form a helical membrane-spanning segment. N-linked (GlcNAc...) asparagine glycosylation is found at N94 and N169. C446 contacts heme.

It belongs to the cytochrome P450 family. The cofactor is heme.

The protein resides in the membrane. It participates in secondary metabolite biosynthesis. Cytochrome P450 monooxygenase; part of the lnb gene cluster that mediates the biosynthesis of diastereomeric piperazines. Lna and lnb clusters encode sets of enzymes that produce overlapping sets of previously undescribed metabolites such as piperazinomycin-like metabolites or morpholine. The lna and lnb biosynthetic pathways appear to be part of a signaling network that controls the formation of sclerotia, a resilient overwintering structure. One primary function of the non-canonical nonribosomal peptide synthetases lnaA and lnbA consists in the reduction of L-tyrosine. The presence in the clusters of tailoring enzymes such as the oxidoreductases lnaB, lnbB, lnaE or lnbE, as well as of the cytochrome P450 monooxygenases lnaC, lnaD, or lnbC, might explain formation of various diastereomeric piperazines. The polypeptide is Cytochrome P450 monooxygenase lnbC (Aspergillus flavus (strain ATCC 200026 / FGSC A1120 / IAM 13836 / NRRL 3357 / JCM 12722 / SRRC 167)).